The primary structure comprises 289 residues: Phosphatidylglycerol--prolipoprotein diacylglyceryl transferase (289 aa).

The next 4 helical transmembrane spans lie at 21-41, 53-73, 95-115, and 122-142; these read IGPL…LLGI, IDPN…IPAA, IWHG…ALIL, and IPIW…QAIG. Arg143 is a binding site for a 1,2-diacyl-sn-glycero-3-phospho-(1'-sn-glycerol). 3 helical membrane passes run 182–202, 215–235, and 247–267; these read PTFL…IWLF, GVMT…IEGL, and IAQM…VWIY.

It belongs to the Lgt family.

The protein resides in the cell inner membrane. The catalysed reaction is L-cysteinyl-[prolipoprotein] + a 1,2-diacyl-sn-glycero-3-phospho-(1'-sn-glycerol) = an S-1,2-diacyl-sn-glyceryl-L-cysteinyl-[prolipoprotein] + sn-glycerol 1-phosphate + H(+). The protein operates within protein modification; lipoprotein biosynthesis (diacylglyceryl transfer). In terms of biological role, catalyzes the transfer of the diacylglyceryl group from phosphatidylglycerol to the sulfhydryl group of the N-terminal cysteine of a prolipoprotein, the first step in the formation of mature lipoproteins. The sequence is that of Phosphatidylglycerol--prolipoprotein diacylglyceryl transferase from Synechococcus elongatus (strain ATCC 33912 / PCC 7942 / FACHB-805) (Anacystis nidulans R2).